The sequence spans 356 residues: Protein trichome birefringence-like 41 (356 aa).

The helical; Signal-anchor for type II membrane protein transmembrane segment at 12–31 threads the bilayer; the sequence is SALVLSLLLLLLLPLLHEAA. Residues 107-109 carry the GDS motif motif; it reads GDS. A DCXHWCLPGXXDXWN motif motif is present at residues 333-347; that stretch reads DCSHWCLSGVPDTWN.

The protein belongs to the PC-esterase family. TBL subfamily.

The protein localises to the membrane. In terms of biological role, may act as a bridging protein that binds pectin and other cell wall polysaccharides. Probably involved in maintaining esterification of pectins. May be involved in the specific O-acetylation of cell wall polymers. This Arabidopsis thaliana (Mouse-ear cress) protein is Protein trichome birefringence-like 41 (TBL41).